The primary structure comprises 448 residues: Biotin carboxylase (448 aa).

The Biotin carboxylation domain occupies 1 to 445 (MLEKVVIANR…NIHYLEKKLG (445 aa)). ATP is bound by residues Lys-116, Lys-159, 165 to 166 (GG), 201 to 204 (EKYL), His-209, and His-236. The ATP-grasp domain maps to 120–317 (IKAMKKAGVP…LVKEQLRIAA (198 aa)). Residue Lys-238 coordinates hydrogencarbonate. Residues Glu-276 and Glu-288 each coordinate ATP. Mg(2+)-binding residues include Glu-276, Glu-288, and Asn-290. Residues Glu-276, Glu-288, and Asn-290 each contribute to the Mn(2+) site. Arg-292, Val-295, and Arg-338 together coordinate hydrogencarbonate. Residue Arg-292 is part of the active site. Arg-338 is a binding site for biotin.

In terms of assembly, acetyl-CoA carboxylase is a heterohexamer of biotin carboxyl carrier protein, biotin carboxylase and the two subunits of carboxyl transferase in a 2:2 complex. Mg(2+) serves as cofactor. It depends on Mn(2+) as a cofactor.

The catalysed reaction is N(6)-biotinyl-L-lysyl-[protein] + hydrogencarbonate + ATP = N(6)-carboxybiotinyl-L-lysyl-[protein] + ADP + phosphate + H(+). It participates in lipid metabolism; malonyl-CoA biosynthesis; malonyl-CoA from acetyl-CoA: step 1/1. In terms of biological role, this protein is a component of the acetyl coenzyme A carboxylase complex; first, biotin carboxylase catalyzes the carboxylation of the carrier protein and then the transcarboxylase transfers the carboxyl group to form malonyl-CoA. This chain is Biotin carboxylase (accC), found in Haemophilus influenzae (strain ATCC 51907 / DSM 11121 / KW20 / Rd).